The chain runs to 460 residues: A-type ATP synthase subunit B (460 aa).

The protein belongs to the ATPase alpha/beta chains family. Has multiple subunits with at least A(3), B(3), C, D, E, F, H, I and proteolipid K(x).

The protein localises to the cell membrane. Functionally, component of the A-type ATP synthase that produces ATP from ADP in the presence of a proton gradient across the membrane. The B chain is a regulatory subunit. The protein is A-type ATP synthase subunit B of Methanosarcina acetivorans (strain ATCC 35395 / DSM 2834 / JCM 12185 / C2A).